The following is an 80-amino-acid chain: Serine palmitoyltransferase small subunit B (80 aa).

Residues 1-11 (MDVKHIKDYLS) are Cytoplasmic-facing. A helical membrane pass occupies residues 12 to 29 (WLYYQYLLITCSYVLEPW). The Lumenal segment spans residues 30 to 36 (EQSIFNT). The helical transmembrane segment at 37 to 57 (LLLTIIAMVIYSSYIFIPIHV) threads the bilayer. Topologically, residues 58 to 80 (RLAVEFFSRIFGGQHESTVALMS) are cytoplasmic.

The protein belongs to the SPTSS family. SPTSSB subfamily. As to quaternary structure, component of the serine palmitoyltransferase (SPT) complex, which is composed of SPTLC1, SPTLC2 or SPTLC3 and SPTSSA or SPTSSB. The heterodimer consisting of SPTLC1 and SPTLC2/SPTLC3 forms the catalytic core of the enzyme, while SPTSSA or SPTSSB subunits determine substrate specificity. SPT also interacts with ORMDL proteins, especially ORMDL3, which negatively regulate SPT activity in the presence of ceramides.

The protein resides in the endoplasmic reticulum membrane. It functions in the pathway lipid metabolism; sphingolipid metabolism. In terms of biological role, component of the serine palmitoyltransferase multisubunit enzyme (SPT) that catalyzes the initial and rate-limiting step in sphingolipid biosynthesis by condensing L-serine and activated acyl-CoA (most commonly palmitoyl-CoA) to form long-chain bases. The SPT complex is composed of SPTLC1, SPTLC2 or SPTLC3 and SPTSSA or SPTSSB. Within this complex, the heterodimer consisting of SPTLC1 and SPTLC2/SPTLC3 forms the catalytic core. Within the SPT complex, SPTSSB stimulates the catalytic activity and plays a role in substrate specificity. SPT complexes with this subunit showing a preference for longer acyl-CoAs. The SPTLC1-SPTLC2-SPTSSB complex shows a strong preference for C18-CoA substrate, while the SPTLC1-SPTLC3-SPTSSB isozyme displays an ability to use a broader range of acyl-CoAs, without apparent preference. In Xenopus laevis (African clawed frog), this protein is Serine palmitoyltransferase small subunit B (sptssb).